The chain runs to 99 residues: Large ribosomal subunit protein bL21 (99 aa).

The protein belongs to the bacterial ribosomal protein bL21 family. As to quaternary structure, part of the 50S ribosomal subunit. Contacts protein L20.

This protein binds to 23S rRNA in the presence of protein L20. The sequence is that of Large ribosomal subunit protein bL21 from Acholeplasma laidlawii (strain PG-8A).